Here is a 208-residue protein sequence, read N- to C-terminus: Imidazole glycerol phosphate synthase subunit HisH (208 aa).

A Glutamine amidotransferase type-1 domain is found at 1–206 (MFAIVDYDTG…KEMVSANDFS (206 aa)). Cys-79 serves as the catalytic Nucleophile. Catalysis depends on residues His-181 and Glu-183.

Heterodimer of HisH and HisF.

It is found in the cytoplasm. It catalyses the reaction 5-[(5-phospho-1-deoxy-D-ribulos-1-ylimino)methylamino]-1-(5-phospho-beta-D-ribosyl)imidazole-4-carboxamide + L-glutamine = D-erythro-1-(imidazol-4-yl)glycerol 3-phosphate + 5-amino-1-(5-phospho-beta-D-ribosyl)imidazole-4-carboxamide + L-glutamate + H(+). It carries out the reaction L-glutamine + H2O = L-glutamate + NH4(+). Its pathway is amino-acid biosynthesis; L-histidine biosynthesis; L-histidine from 5-phospho-alpha-D-ribose 1-diphosphate: step 5/9. In terms of biological role, IGPS catalyzes the conversion of PRFAR and glutamine to IGP, AICAR and glutamate. The HisH subunit catalyzes the hydrolysis of glutamine to glutamate and ammonia as part of the synthesis of IGP and AICAR. The resulting ammonia molecule is channeled to the active site of HisF. The chain is Imidazole glycerol phosphate synthase subunit HisH from Lactiplantibacillus plantarum (strain ATCC BAA-793 / NCIMB 8826 / WCFS1) (Lactobacillus plantarum).